We begin with the raw amino-acid sequence, 444 residues long: Exodeoxyribonuclease 7 large subunit (444 aa).

The protein belongs to the XseA family. In terms of assembly, heterooligomer composed of large and small subunits.

The protein localises to the cytoplasm. It catalyses the reaction Exonucleolytic cleavage in either 5'- to 3'- or 3'- to 5'-direction to yield nucleoside 5'-phosphates.. Its function is as follows. Bidirectionally degrades single-stranded DNA into large acid-insoluble oligonucleotides, which are then degraded further into small acid-soluble oligonucleotides. The protein is Exodeoxyribonuclease 7 large subunit of Rickettsia conorii (strain ATCC VR-613 / Malish 7).